A 305-amino-acid chain; its full sequence is UDP-N-acetylenolpyruvoylglucosamine reductase (305 aa).

Residues 34 to 199 (RVGGPAQVLF…TSARFRGEVK (166 aa)) form the FAD-binding PCMH-type domain. Arg-179 is a catalytic residue. The Proton donor role is filled by Ser-228. The active site involves Glu-298.

This sequence belongs to the MurB family. The cofactor is FAD.

The protein resides in the cytoplasm. It catalyses the reaction UDP-N-acetyl-alpha-D-muramate + NADP(+) = UDP-N-acetyl-3-O-(1-carboxyvinyl)-alpha-D-glucosamine + NADPH + H(+). The protein operates within cell wall biogenesis; peptidoglycan biosynthesis. Its function is as follows. Cell wall formation. This Bradyrhizobium diazoefficiens (strain JCM 10833 / BCRC 13528 / IAM 13628 / NBRC 14792 / USDA 110) protein is UDP-N-acetylenolpyruvoylglucosamine reductase.